The chain runs to 577 residues: MFS-type transporter CPUR_05422 (577 aa).

A disordered region spans residues 1–49; sequence MSAMSAMGKPEHGSATTSDLEHRATESSLEKQDVEAAPPGPVKPVDPSP. The segment covering 19 to 34 has biased composition (basic and acidic residues); sequence DLEHRATESSLEKQDV. A compositionally biased stretch (pro residues) spans 38-47; the sequence is PPGPVKPVDP. A run of 14 helical transmembrane segments spans residues 52 to 72, 93 to 113, 123 to 143, 157 to 177, 184 to 204, 212 to 232, 249 to 269, 285 to 305, 326 to 346, 359 to 379, 383 to 403, 416 to 436, 449 to 469, and 525 to 545; these read STLK…LVAV, DVGW…LLFG, VVLL…GAAP, VGSA…IPLA, GLMG…GGAF, WCFY…FFYF, ILSL…CLLL, IIVL…VQIC, FLTT…IPIW, GIQL…GGLL, IGYY…GAGL, VIGY…TPNL, MGIA…VAVG, and VFIV…CMEW. Positions 554-577 are disordered; that stretch reads PPAGPPAGAPTESAPVETKAAGHT.

It belongs to the major facilitator superfamily. TCR/Tet family.

The protein resides in the membrane. MFS-type transporter; part of the ergochrome gene cluster responsible for the typical purple-black color of the ergot sclerotia. The ergochrome gene cluster produces several ergot pigments including the yellow ergochrome secalonic acid and its derivatives, as well as the red anthraquinones endocrocin and clavorubin. The polypeptide is MFS-type transporter CPUR_05422 (Claviceps purpurea (strain 20.1) (Ergot fungus)).